A 385-amino-acid chain; its full sequence is MFKKTKITILGATGSIGDSTLAVIRETNDFEVFALTAFSNVEKLAELCQEFKPKFAVVPDLSKKQKLQSLVTDVEVLVGESGLEKVSSLAEIDIVMSAIVGIAGLKPTFAAAKAGKKILLANKESLVTAGHLLIDEVVKNNAQLIPVDSEHNAIFQCIDNHDKKCLPEIDKIILTASGGPFRDKQLHELTDVTPEQACNHPNWQMGRKISVDSSTMVNKALEVIEAYWLFSVSADKIGVLIHPQSVTHSIVRYVDGSYIAQLGVPDMKTPIANAMYYPKRGSVNVESLDFTKYQLTFREACFERFEALKIVFNNLQNKNYAANIVFNAANEELVAAFLNKKIKYLEIIEVNKKVTKELNFENPKNIEEVFEIDRKTREYVDSVLG.

Residues T13, G14, S15, I16, N40, and N122 each coordinate NADPH. K123 contributes to the 1-deoxy-D-xylulose 5-phosphate binding site. E124 provides a ligand contact to NADPH. D148 contributes to the Mn(2+) binding site. S149, E150, S177, and H200 together coordinate 1-deoxy-D-xylulose 5-phosphate. Residue E150 coordinates Mn(2+). G206 serves as a coordination point for NADPH. The 1-deoxy-D-xylulose 5-phosphate site is built by S213, N218, K219, and E222. E222 contacts Mn(2+).

Belongs to the DXR family. Mg(2+) is required as a cofactor. Requires Mn(2+) as cofactor.

The catalysed reaction is 2-C-methyl-D-erythritol 4-phosphate + NADP(+) = 1-deoxy-D-xylulose 5-phosphate + NADPH + H(+). It participates in isoprenoid biosynthesis; isopentenyl diphosphate biosynthesis via DXP pathway; isopentenyl diphosphate from 1-deoxy-D-xylulose 5-phosphate: step 1/6. Its function is as follows. Catalyzes the NADPH-dependent rearrangement and reduction of 1-deoxy-D-xylulose-5-phosphate (DXP) to 2-C-methyl-D-erythritol 4-phosphate (MEP). This Francisella tularensis subsp. holarctica (strain FTNF002-00 / FTA) protein is 1-deoxy-D-xylulose 5-phosphate reductoisomerase.